The following is a 349-amino-acid chain: Fe(3+) ions import ATP-binding protein FbpC (349 aa).

The ABC transporter domain occupies leucine 4 to leucine 236. Glycine 36–threonine 43 is a binding site for ATP.

Belongs to the ABC transporter superfamily. Fe(3+) ion importer (TC 3.A.1.10) family. The complex is composed of two ATP-binding proteins (FbpC), two transmembrane proteins (FbpB) and a solute-binding protein (FbpA).

It is found in the cell inner membrane. It carries out the reaction Fe(3+)(out) + ATP + H2O = Fe(3+)(in) + ADP + phosphate + H(+). In terms of biological role, part of the ABC transporter complex FbpABC involved in Fe(3+) ions import. Responsible for energy coupling to the transport system. This Yersinia enterocolitica protein is Fe(3+) ions import ATP-binding protein FbpC.